The sequence spans 235 residues: Glycerol-3-phosphate acyltransferase (235 aa).

The next 6 membrane-spanning stretches (helical) occupy residues 4–24 (LLAI…IMAG), 56–76 (TVTL…VAFF), 94–114 (LLAG…GFKG), 126–146 (IGIA…TVWF), 152–172 (VASI…KYVF), and 194–214 (SLDY…LFTH).

Belongs to the PlsY family. Probably interacts with PlsX.

Its subcellular location is the cell inner membrane. The catalysed reaction is an acyl phosphate + sn-glycerol 3-phosphate = a 1-acyl-sn-glycero-3-phosphate + phosphate. The protein operates within lipid metabolism; phospholipid metabolism. In terms of biological role, catalyzes the transfer of an acyl group from acyl-phosphate (acyl-PO(4)) to glycerol-3-phosphate (G3P) to form lysophosphatidic acid (LPA). This enzyme utilizes acyl-phosphate as fatty acyl donor, but not acyl-CoA or acyl-ACP. The protein is Glycerol-3-phosphate acyltransferase of Chlorobium phaeovibrioides (strain DSM 265 / 1930) (Prosthecochloris vibrioformis (strain DSM 265)).